The following is a 354-amino-acid chain: D-alanine--D-alanine ligase (354 aa).

Positions 132–342 (KMVFERAGLP…FPSLVDRLLQ (211 aa)) constitute an ATP-grasp domain. Residue 168-223 (EAQVGYPCFVKPANLGSSVGIAKVRNRSELEAALDNAASYDRRIIVEAGLTDIREV) coordinates ATP. Mg(2+)-binding residues include aspartate 295, glutamate 309, and asparagine 311.

Belongs to the D-alanine--D-alanine ligase family. Mg(2+) is required as a cofactor. Mn(2+) serves as cofactor.

It is found in the cytoplasm. The catalysed reaction is 2 D-alanine + ATP = D-alanyl-D-alanine + ADP + phosphate + H(+). Its pathway is cell wall biogenesis; peptidoglycan biosynthesis. Functionally, cell wall formation. This is D-alanine--D-alanine ligase from Synechocystis sp. (strain ATCC 27184 / PCC 6803 / Kazusa).